A 450-amino-acid polypeptide reads, in one-letter code: tRNA-2-methylthio-N(6)-dimethylallyladenosine synthase (450 aa).

One can recognise an MTTase N-terminal domain in the interval 17-131; it reads KKFFVKTYGC…LNHVLDEVLA (115 aa). [4Fe-4S] cluster-binding residues include Cys-26, Cys-62, Cys-94, Cys-168, Cys-172, and Cys-175. Positions 154-385 constitute a Radical SAM core domain; the sequence is REDQIKAYVS…LQLQDTIYMK (232 aa). Positions 388–450 constitute a TRAM domain; the sequence is QAFLGQTVEV…SHQTLLGDLQ (63 aa).

This sequence belongs to the methylthiotransferase family. MiaB subfamily. In terms of assembly, monomer. [4Fe-4S] cluster serves as cofactor.

The protein resides in the cytoplasm. It carries out the reaction N(6)-dimethylallyladenosine(37) in tRNA + (sulfur carrier)-SH + AH2 + 2 S-adenosyl-L-methionine = 2-methylsulfanyl-N(6)-dimethylallyladenosine(37) in tRNA + (sulfur carrier)-H + 5'-deoxyadenosine + L-methionine + A + S-adenosyl-L-homocysteine + 2 H(+). Its function is as follows. Catalyzes the methylthiolation of N6-(dimethylallyl)adenosine (i(6)A), leading to the formation of 2-methylthio-N6-(dimethylallyl)adenosine (ms(2)i(6)A) at position 37 in tRNAs that read codons beginning with uridine. The polypeptide is tRNA-2-methylthio-N(6)-dimethylallyladenosine synthase (Protochlamydia amoebophila (strain UWE25)).